Here is a 206-residue protein sequence, read N- to C-terminus: MIVTIDGVAASGKSSVSSGVARALGIPYVSSGLLYRAATLLGLEAALDLSDAPRLLAHLRALPLRLEPLAEGNRVWSGERDLTPGLHQSAVDAGVSTVAAHPELRAWVDEQLRQLPPPFVAEGRDMGTNVFPDAPAKFYLTASPRIRAERRSAERPEDVDAIEAALIARDRKDAAQSAPAPDARVIDTGPLGLEEVIGEILGEIGQ.

7–15 (GVAASGKSS) is an ATP binding site.

This sequence belongs to the cytidylate kinase family. Type 1 subfamily.

Its subcellular location is the cytoplasm. It catalyses the reaction CMP + ATP = CDP + ADP. It carries out the reaction dCMP + ATP = dCDP + ADP. The sequence is that of Cytidylate kinase from Deinococcus radiodurans (strain ATCC 13939 / DSM 20539 / JCM 16871 / CCUG 27074 / LMG 4051 / NBRC 15346 / NCIMB 9279 / VKM B-1422 / R1).